A 468-amino-acid polypeptide reads, in one-letter code: UDP-glycosyltransferase 89B2 (468 aa).

UDP-alpha-D-glucose is bound by residues S287, 347 to 348, 365 to 373, and 387 to 390; these read WV, HCGWNSVME, and SADQ.

Belongs to the UDP-glycosyltransferase family.

In terms of biological role, may glycosylate diterpenes or flavonols in leaves. In Stevia rebaudiana (Stevia), this protein is UDP-glycosyltransferase 89B2.